The chain runs to 598 residues: MTALANIRNFSIIAHIDHGKSTLADRFIQMCGALQDREMQAQVLDSMDIERERGITIKAQSVTLYYDHPNGERYQLNFIDTPGHVDFSYEVSRSLAACEGALLVVDAAQGVEAQSVANCYTAVDQGLEVMAVLNKIDLPQVEPERVIQEIEDIIGIDAVDAPRVSAKSGLGVDKLLEALVEFIPAPTGDRDAPLQALIIDSWFDNYLGVVSLVRVRQGTIKKGDKLYIKSTKDAHLVGSIGVFTPKPLDTGILEAGEVGFIIAGIKDIAGAPVGDTITHASTPDVDRIPGFKQITPQVYAGMFPVESTDFEKFREALQKLQINDASLFFEPDTSDALGFGFRCGFLGMLHMEIIQERLEREYDLDLITTAPSVIYEIVKKDGSIIYVDNPSRLPEPNNIEEFREPIARCQILVPQDYLGNVMTLCIERRGVQVDMRFMGRQVQLIFDIPMGEVVMDFFDRLKSVSRGFASLDYNFERYQVDKLVKVDVLINGDKVDALAMIVHETQSRYRGNALVTKMKELIPRQMFDVAIQAAIGSQIIGRSTVKAMRKDVLAKCYGGDVSRKKKLLSKQKAGKKRMKQVGNVEIPQEAFLAVLQVD.

The tr-type G domain maps to 5 to 187 (ANIRNFSIIA…ALVEFIPAPT (183 aa)). GTP contacts are provided by residues 17-22 (DHGKST) and 134-137 (NKID).

The protein belongs to the TRAFAC class translation factor GTPase superfamily. Classic translation factor GTPase family. LepA subfamily.

It is found in the cell inner membrane. The enzyme catalyses GTP + H2O = GDP + phosphate + H(+). Required for accurate and efficient protein synthesis under certain stress conditions. May act as a fidelity factor of the translation reaction, by catalyzing a one-codon backward translocation of tRNAs on improperly translocated ribosomes. Back-translocation proceeds from a post-translocation (POST) complex to a pre-translocation (PRE) complex, thus giving elongation factor G a second chance to translocate the tRNAs correctly. Binds to ribosomes in a GTP-dependent manner. This chain is Elongation factor 4, found in Psychrobacter cryohalolentis (strain ATCC BAA-1226 / DSM 17306 / VKM B-2378 / K5).